The chain runs to 146 residues: Hemoglobin subunit beta (146 aa).

An N-acetylvaline modification is found at V1. Positions 2–146 (HLTAEEKSAV…VANALAHKYH (145 aa)) constitute a Globin domain. Position 12 is a phosphothreonine (T12). S44 bears the Phosphoserine mark. N6-acetyllysine is present on K59. A heme b-binding site is contributed by H63. The residue at position 82 (K82) is an N6-acetyllysine. Position 92 (H92) interacts with heme b. C93 is modified (S-nitrosocysteine). K144 is subject to N6-acetyllysine.

This sequence belongs to the globin family. As to quaternary structure, heterotetramer of two alpha chains and two beta chains. In terms of tissue distribution, red blood cells.

Involved in oxygen transport from the lung to the various peripheral tissues. The chain is Hemoglobin subunit beta (HBB) from Leptonychotes weddellii (Weddell seal).